We begin with the raw amino-acid sequence, 615 residues long: MGLRYDVIVVGLGHAGSEAALACARMGLATLGLTLKRERSAVLSCNPAVGGTAKGHLVRELDALGGEMGRAADQVGTHFKTLNASKGPAVQASRLLCDRDAYAVGMQAVLFSQPNLTVREGEVAALVAGGGRVEGVVLGDGTQVSASAVLLTTGTFLQALMHVGEQKEVGGRLGDDAARGLSESLRALGFTLGRFKTGTPARLARASIDWDALEPQPGDTRVRPFSWRTKVEGEGGMPFPRQPSVTCALTETTPRTHAVLRDNLHRSPLYQGDIVGRGPRYCPSLEDKVVRFASRERHQVFLEPEGPTSPLVYPAGLSTSLPADVQLTFLHTIRGLEQVEVVRFGYAVEYDYAPPTQLKATLETKAIAGLYFAGQLNGTSGYEEAAFQGLWAGINAALQLKGEPPLLPGRDEAHGAVLVDDLVTKGVDEPFRMFTSRSEHRLKLREGNADLRLARHGHRVGLLPREALERVEARGRAVTEEVARLKRTGLAARLRRPEVTYAQLGEGREDWPVLSPDVAEEVEVEVKYEGYVAQAARAAAREAESTDRWRIPEGYCFHEVRGLSSEAVEKLTAHRPGTVGQARRIPGLTPAAVSLLLVALKRGTEAPAVCAQPED.

11 to 16 serves as a coordination point for FAD; it reads GLGHAG. 278-292 provides a ligand contact to NAD(+); the sequence is GPRYCPSLEDKVVRF.

The protein belongs to the MnmG family. In terms of assembly, homodimer. Heterotetramer of two MnmE and two MnmG subunits. FAD serves as cofactor.

The protein resides in the cytoplasm. Functionally, NAD-binding protein involved in the addition of a carboxymethylaminomethyl (cmnm) group at the wobble position (U34) of certain tRNAs, forming tRNA-cmnm(5)s(2)U34. The sequence is that of tRNA uridine 5-carboxymethylaminomethyl modification enzyme MnmG from Myxococcus xanthus (strain DK1622).